Here is a 691-residue protein sequence, read N- to C-terminus: Methionine--tRNA ligase (691 aa).

The 'HIGH' region signature appears at 15 to 25; sequence PYTNGPIHIGH. 4 residues coordinate Zn(2+): Cys147, Cys150, Cys160, and Cys163. A 'KMSKS' region motif is present at residues 336-340; it reads KLSTS. Thr339 provides a ligand contact to ATP. In terms of domain architecture, tRNA-binding spans 589–691; the sequence is DFTKMDLRVG…DGVKAGTTIN (103 aa).

The protein belongs to the class-I aminoacyl-tRNA synthetase family. MetG type 1 subfamily. In terms of assembly, homodimer. It depends on Zn(2+) as a cofactor.

Its subcellular location is the cytoplasm. The enzyme catalyses tRNA(Met) + L-methionine + ATP = L-methionyl-tRNA(Met) + AMP + diphosphate. Is required not only for elongation of protein synthesis but also for the initiation of all mRNA translation through initiator tRNA(fMet) aminoacylation. The sequence is that of Methionine--tRNA ligase from Christiangramia forsetii (strain DSM 17595 / CGMCC 1.15422 / KT0803) (Gramella forsetii).